The following is a 645-amino-acid chain: Transcription factor AN6788 (645 aa).

Positions Met-1–Pro-21 are disordered. Residues Cys-25–Cys-52 constitute a DNA-binding region (zn(2)-C6 fungal-type). Residues Pro-113–Gln-131 are compositionally biased toward basic and acidic residues. The tract at residues Pro-113–Ser-170 is disordered.

Its subcellular location is the nucleus. Its function is as follows. Transcription factors AN6788 and AN6790 act in tandem to regulate the expression of the non-reducing polyketide synthase pkfA from the aspernidine A biosynthesis cluster. They do not control the expression of the other genes involved in aspernidine A biosynthesis, nor do they regulate the expression of the highly reducing polyketide synthase AN6791 and the esterase AN6793 with which they are predicted to form a secondary metabolite biosynthesis cluster. This Emericella nidulans (strain FGSC A4 / ATCC 38163 / CBS 112.46 / NRRL 194 / M139) (Aspergillus nidulans) protein is Transcription factor AN6788.